Here is a 272-residue protein sequence, read N- to C-terminus: Regulatory protein RecX (272 aa).

Belongs to the RecX family.

The protein resides in the cytoplasm. In terms of biological role, modulates RecA activity. The polypeptide is Regulatory protein RecX (Staphylococcus aureus (strain Newman)).